We begin with the raw amino-acid sequence, 282 residues long: Ribosomal protein L11 methyltransferase (282 aa).

The S-adenosyl-L-methionine site is built by Thr-133, Gly-154, Asp-175, and Asn-216.

This sequence belongs to the methyltransferase superfamily. PrmA family.

The protein resides in the cytoplasm. The catalysed reaction is L-lysyl-[protein] + 3 S-adenosyl-L-methionine = N(6),N(6),N(6)-trimethyl-L-lysyl-[protein] + 3 S-adenosyl-L-homocysteine + 3 H(+). Methylates ribosomal protein L11. The chain is Ribosomal protein L11 methyltransferase from Campylobacter jejuni subsp. doylei (strain ATCC BAA-1458 / RM4099 / 269.97).